The sequence spans 391 residues: Terminal nucleotidyltransferase 5C (391 aa).

It belongs to the TENT family. As to quaternary structure, interacts with BCCIP and PABPC1; the interaction has no effect on TENT5C poly(A) polymerase function. Interacts with PLK4; this interaction leads to the TENT5C recruitment into the centrosome.

The protein localises to the nucleus. The protein resides in the cytoplasm. It is found in the cytoskeleton. It localises to the microtubule organizing center. Its subcellular location is the centrosome. The catalysed reaction is RNA(n) + ATP = RNA(n)-3'-adenine ribonucleotide + diphosphate. Its function is as follows. Catalyzes the transfer of one adenosine molecule from an ATP to an mRNA poly(A) tail bearing a 3'-OH terminal group and enhances mRNA stability and gene expression. Can also elongate RNA oligos ending with uridine molecule, provided that the sequence is adenosine-rich. Mainly targets mRNAs encoding endoplasmic reticulum-targeted protein. This is Terminal nucleotidyltransferase 5C from Rattus norvegicus (Rat).